A 2131-amino-acid chain; its full sequence is Sodium channel protein para (2131 aa).

The Cytoplasmic segment spans residues Met-1–Tyr-148. Positions His-35–Gly-48 are enriched in basic and acidic residues. A disordered region spans residues His-35–Pro-84. The span at Tyr-64 to Pro-73 shows a compositional bias: acidic residues. The I repeat unit spans residues Trp-134–Arg-467. A helical membrane pass occupies residues Ile-149–Met-172. At Pro-173–Ser-180 the chain is on the extracellular side. A helical membrane pass occupies residues Thr-181–Ala-199. Over Arg-200 to Asp-212 the chain is Cytoplasmic. Residues Ala-213–Ile-231 form a helical membrane-spanning segment. Over Asp-232–Ala-237 the chain is Extracellular. The helical; Voltage-sensor transmembrane segment at Ala-238 to Leu-257 threads the bilayer. The Cytoplasmic segment spans residues Lys-258 to Asp-273. Residues Val-274 to Leu-297 traverse the membrane as a helical segment. The Extracellular portion of the chain corresponds to Thr-298–Ser-373. An intrachain disulfide couples Cys-301 to Cys-350. 3 N-linked (GlcNAc...) asparagine glycosylation sites follow: Asn-313, Asn-325, and Asn-343. Positions Phe-374–Leu-398 form an intramembrane region, pore-forming. Topologically, residues Arg-399–His-405 are extracellular. A helical membrane pass occupies residues Met-406–Ile-427. The Cytoplasmic portion of the chain corresponds to Val-428–Ser-812. Phosphoserine; by PKA occurs at positions 553 and 570. Disordered regions lie at residues Ser-553 to Ser-572 and Lys-671 to Gly-691. Over residues Thr-680–Gly-691 the composition is skewed to polar residues. Residues Asp-799 to Arg-1069 form an II repeat. The chain crosses the membrane as a helical span at residues Leu-813 to Met-837. Topologically, residues Asp-838–Arg-848 are extracellular. A helical membrane pass occupies residues Val-849–Ser-873. The Cytoplasmic segment spans residues Pro-874 to Glu-880. The chain crosses the membrane as a helical span at residues Gly-881–Glu-900. The Extracellular portion of the chain corresponds to Gly-901–Ser-906. Residues Val-907 to Leu-926 traverse the membrane as a helical; Voltage-sensor segment. Residues Asn-927 to Gly-941 are Cytoplasmic-facing. Residues Asn-942 to Gly-963 form a helical membrane-spanning segment. At Lys-964–Asp-985 the chain is on the extracellular side. An N-linked (GlcNAc...) asparagine glycan is attached at Asn-982. An intramembrane region (pore-forming) is located at residues Phe-986–Trp-1006. Residues Asp-1007–Asp-1013 lie on the Extracellular side of the membrane. Residues Cys-1008 and Cys-1016 are joined by a disulfide bond. A helical membrane pass occupies residues Val-1014–Ser-1041. Over Asn-1042 to Gln-1296 the chain is Cytoplasmic. Residues Asp-1166–Gly-1240 form a disordered region. Residues Tyr-1177–Ser-1194 are compositionally biased toward polar residues. Residues Pro-1199 to Leu-1225 show a composition bias toward basic and acidic residues. Over residues Gly-1226–Gly-1240 the composition is skewed to acidic residues. Residues Trp-1284 to Lys-1591 form an III repeat. Residues Leu-1297 to Leu-1320 traverse the membrane as a helical segment. The Extracellular segment spans residues Glu-1321–Ile-1334. The chain crosses the membrane as a helical span at residues Leu-1335–Phe-1359. Topologically, residues Lys-1360–Asn-1365 are cytoplasmic. The chain crosses the membrane as a helical span at residues Ala-1366–Val-1387. Residues Gly-1388–Gly-1391 lie on the Extracellular side of the membrane. A helical; Voltage-sensor transmembrane segment spans residues Ile-1392–Met-1413. Over Gln-1414–Asn-1432 the chain is Cytoplasmic. The helical transmembrane segment at Val-1433–Gly-1454 threads the bilayer. The Extracellular portion of the chain corresponds to Lys-1455–Val-1495. Asn-1463 and Asn-1482 each carry an N-linked (GlcNAc...) asparagine glycan. The pore-forming intramembrane region spans Gly-1496–Asp-1517. The Extracellular segment spans residues Ala-1518–Asn-1533. Residues Ile-1534 to Ile-1560 traverse the membrane as a helical segment. At Asp-1561–Glu-1614 the chain is on the cytoplasmic side. The stretch at Ile-1601–Asn-1862 is one IV repeat. A helical transmembrane segment spans residues Ile-1615–Leu-1638. Topologically, residues Asp-1639–Ala-1649 are extracellular. The chain crosses the membrane as a helical span at residues Val-1650–Leu-1673. The Cytoplasmic portion of the chain corresponds to Arg-1674–Ile-1679. The chain crosses the membrane as a helical span at residues Glu-1680–Ile-1703. Topologically, residues Glu-1704–Leu-1713 are extracellular. Residues Arg-1714–Arg-1735 form a helical; Voltage-sensor membrane-spanning segment. Residues Thr-1736 to Asn-1750 are Cytoplasmic-facing. A helical transmembrane segment spans residues Ile-1751 to Val-1773. The Extracellular portion of the chain corresponds to Lys-1774–Thr-1787. Positions Phe-1788–Ala-1810 form an intramembrane region, pore-forming. Over Ile-1811–Val-1835 the chain is Extracellular. Residues Gly-1836–Leu-1860 traverse the membrane as a helical segment. The Cytoplasmic segment spans residues Glu-1861–Val-2131. An EF-hand domain is found at Asp-1877 to Pro-1912. The interval His-2001 to Arg-2096 is disordered. Residues Gly-2021–Asp-2035 are compositionally biased toward acidic residues. Over residues Ala-2068–Ser-2088 the composition is skewed to low complexity.

This sequence belongs to the sodium channel (TC 1.A.1.10) family. Para subfamily.

The protein resides in the cell membrane. In terms of biological role, mediates the voltage-dependent sodium ion permeability of excitable membranes. Assuming opened or closed conformations in response to the voltage difference across the membrane, the protein forms a sodium-selective channel through which Na(+) ions may pass in accordance with their electrochemical gradient. The sequence is that of Sodium channel protein para (para) from Drosophila melanogaster (Fruit fly).